A 461-amino-acid chain; its full sequence is MGIPMQIYQDGKGVQFYHTRYQNVFDERASKYGNYTVNNDYPQLPDTIKEHIDQLTFSNVGEDGGDVGNYSEEDDDGDEEKELEDVFRSNRGLEFVRINNYFTTHDLQSFKSFRNFNSKYWIFYSNQAEDKKLLLYDFNGQHLIFIKQQFYGQLNLLLSDAIICMDCNFGYNSNTIQILVGFQNGKLLKLNCDLNGNVNNHLLLKDPSTSSHQSHLSILNVWAGLLPHFVVSFSLKDGLLITSLDHQQSNGSFQSFHTNIDLPVDLRTTTNVKSVLNFPQFTLYKGNDMIFHCKNLLGSDASTLNKEINFMLKIDEDVQKIDYLLKTNHILLETNMRYLSIPTRDPIENSNSSPPVSDSEVYPIFYKTQELHVHASGTGRQIANNGKYIFITEQHLYGTALSVYKYSISFKRWLFVGYSDIRAKYGIRSVKDLFVGNCPSVNSPVLTILTDDNNIQTILLK.

Residues S58 to E80 form a disordered region. Residues S71 to E80 show a composition bias toward acidic residues.

It is found in the cytoplasm. The protein resides in the nucleus. Involved in the regulation of anaerobiotic glycerol metabolism. The polypeptide is Protein YIG1 (YIG1) (Saccharomyces cerevisiae (strain ATCC 204508 / S288c) (Baker's yeast)).